We begin with the raw amino-acid sequence, 469 residues long: 3-isopropylmalate dehydratase large subunit (469 aa).

Residues Cys-350, Cys-410, and Cys-413 each coordinate [4Fe-4S] cluster.

It belongs to the aconitase/IPM isomerase family. LeuC type 1 subfamily. As to quaternary structure, heterodimer of LeuC and LeuD. It depends on [4Fe-4S] cluster as a cofactor.

The enzyme catalyses (2R,3S)-3-isopropylmalate = (2S)-2-isopropylmalate. It functions in the pathway amino-acid biosynthesis; L-leucine biosynthesis; L-leucine from 3-methyl-2-oxobutanoate: step 2/4. Functionally, catalyzes the isomerization between 2-isopropylmalate and 3-isopropylmalate, via the formation of 2-isopropylmaleate. The polypeptide is 3-isopropylmalate dehydratase large subunit (Rhizobium rhizogenes (strain K84 / ATCC BAA-868) (Agrobacterium radiobacter)).